The primary structure comprises 458 residues: tRNA-2-methylthio-N(6)-dimethylallyladenosine synthase (458 aa).

The 120-residue stretch at 15–134 (KKVFIKTYGC…LPDLLEQTKQ (120 aa)) folds into the MTTase N-terminal domain. Residues cysteine 24, cysteine 60, cysteine 97, cysteine 175, cysteine 179, and cysteine 182 each contribute to the [4Fe-4S] cluster site. Residues 161–393 (RKRGVSAFLT…QVLLLEQQNA (233 aa)) enclose the Radical SAM core domain. Positions 396-457 (RSKIGQTTDV…SNSFVGEIAN (62 aa)) constitute a TRAM domain.

This sequence belongs to the methylthiotransferase family. MiaB subfamily. Monomer. [4Fe-4S] cluster is required as a cofactor.

It localises to the cytoplasm. The enzyme catalyses N(6)-dimethylallyladenosine(37) in tRNA + (sulfur carrier)-SH + AH2 + 2 S-adenosyl-L-methionine = 2-methylsulfanyl-N(6)-dimethylallyladenosine(37) in tRNA + (sulfur carrier)-H + 5'-deoxyadenosine + L-methionine + A + S-adenosyl-L-homocysteine + 2 H(+). Functionally, catalyzes the methylthiolation of N6-(dimethylallyl)adenosine (i(6)A), leading to the formation of 2-methylthio-N6-(dimethylallyl)adenosine (ms(2)i(6)A) at position 37 in tRNAs that read codons beginning with uridine. The chain is tRNA-2-methylthio-N(6)-dimethylallyladenosine synthase from Bartonella quintana (strain Toulouse) (Rochalimaea quintana).